The sequence spans 406 residues: 2,3-bisphosphoglycerate-independent phosphoglycerate mutase (406 aa).

This sequence belongs to the BPG-independent phosphoglycerate mutase family. A-PGAM subfamily.

The enzyme catalyses (2R)-2-phosphoglycerate = (2R)-3-phosphoglycerate. Its pathway is carbohydrate degradation; glycolysis; pyruvate from D-glyceraldehyde 3-phosphate: step 3/5. Functionally, catalyzes the interconversion of 2-phosphoglycerate and 3-phosphoglycerate. The sequence is that of 2,3-bisphosphoglycerate-independent phosphoglycerate mutase from Methanococcus maripaludis (strain C5 / ATCC BAA-1333).